The following is a 156-amino-acid chain: Crossover junction endodeoxyribonuclease RuvC (156 aa).

Active-site residues include Asp-7, Glu-67, and Asp-140. 3 residues coordinate Mg(2+): Asp-7, Glu-67, and Asp-140.

The protein belongs to the RuvC family. As to quaternary structure, homodimer which binds Holliday junction (HJ) DNA. The HJ becomes 2-fold symmetrical on binding to RuvC with unstacked arms; it has a different conformation from HJ DNA in complex with RuvA. In the full resolvosome a probable DNA-RuvA(4)-RuvB(12)-RuvC(2) complex forms which resolves the HJ. Mg(2+) is required as a cofactor.

The protein localises to the cytoplasm. The catalysed reaction is Endonucleolytic cleavage at a junction such as a reciprocal single-stranded crossover between two homologous DNA duplexes (Holliday junction).. The RuvA-RuvB-RuvC complex processes Holliday junction (HJ) DNA during genetic recombination and DNA repair. Endonuclease that resolves HJ intermediates. Cleaves cruciform DNA by making single-stranded nicks across the HJ at symmetrical positions within the homologous arms, yielding a 5'-phosphate and a 3'-hydroxyl group; requires a central core of homology in the junction. The consensus cleavage sequence is 5'-(A/T)TT(C/G)-3'. Cleavage occurs on the 3'-side of the TT dinucleotide at the point of strand exchange. HJ branch migration catalyzed by RuvA-RuvB allows RuvC to scan DNA until it finds its consensus sequence, where it cleaves and resolves the cruciform DNA. The protein is Crossover junction endodeoxyribonuclease RuvC of Rickettsia felis (strain ATCC VR-1525 / URRWXCal2) (Rickettsia azadi).